A 227-amino-acid chain; its full sequence is Thiamine-phosphate synthase (227 aa).

4-amino-2-methyl-5-(diphosphooxymethyl)pyrimidine is bound by residues 46 to 50 (QLRDK) and N87. Mg(2+) is bound by residues D88 and D107. S126 contributes to the 4-amino-2-methyl-5-(diphosphooxymethyl)pyrimidine binding site. 152-154 (TPT) contacts 2-[(2R,5Z)-2-carboxy-4-methylthiazol-5(2H)-ylidene]ethyl phosphate. Residue K155 participates in 4-amino-2-methyl-5-(diphosphooxymethyl)pyrimidine binding. A 2-[(2R,5Z)-2-carboxy-4-methylthiazol-5(2H)-ylidene]ethyl phosphate-binding site is contributed by G183.

Belongs to the thiamine-phosphate synthase family. It depends on Mg(2+) as a cofactor.

The catalysed reaction is 2-[(2R,5Z)-2-carboxy-4-methylthiazol-5(2H)-ylidene]ethyl phosphate + 4-amino-2-methyl-5-(diphosphooxymethyl)pyrimidine + 2 H(+) = thiamine phosphate + CO2 + diphosphate. It catalyses the reaction 2-(2-carboxy-4-methylthiazol-5-yl)ethyl phosphate + 4-amino-2-methyl-5-(diphosphooxymethyl)pyrimidine + 2 H(+) = thiamine phosphate + CO2 + diphosphate. The enzyme catalyses 4-methyl-5-(2-phosphooxyethyl)-thiazole + 4-amino-2-methyl-5-(diphosphooxymethyl)pyrimidine + H(+) = thiamine phosphate + diphosphate. It participates in cofactor biosynthesis; thiamine diphosphate biosynthesis; thiamine phosphate from 4-amino-2-methyl-5-diphosphomethylpyrimidine and 4-methyl-5-(2-phosphoethyl)-thiazole: step 1/1. In terms of biological role, condenses 4-methyl-5-(beta-hydroxyethyl)thiazole monophosphate (THZ-P) and 2-methyl-4-amino-5-hydroxymethyl pyrimidine pyrophosphate (HMP-PP) to form thiamine monophosphate (TMP). The chain is Thiamine-phosphate synthase from Mycolicibacterium smegmatis (strain ATCC 700084 / mc(2)155) (Mycobacterium smegmatis).